Reading from the N-terminus, the 113-residue chain is FK506-binding protein 1B (113 aa).

In terms of domain architecture, PPIase FKBP-type spans 19-113 (GQTVVIEYTG…IFDVYLKGLQ (95 aa)).

The protein belongs to the FKBP-type PPIase family. FKBP1 subfamily.

It localises to the cytoplasm. The catalysed reaction is [protein]-peptidylproline (omega=180) = [protein]-peptidylproline (omega=0). Inhibited by both FK506 and rapamycin. PPIases accelerate the folding of proteins. It catalyzes the cis-trans isomerization of proline imidic peptide bonds in oligopeptides. This Neurospora crassa (strain ATCC 24698 / 74-OR23-1A / CBS 708.71 / DSM 1257 / FGSC 987) protein is FK506-binding protein 1B (fkr-3).